Reading from the N-terminus, the 200-residue chain is Probable GTP-binding protein EngB (200 aa).

The EngB-type G domain maps to 23 to 197 (KNSEVVFIGR…RERVLKDVLG (175 aa)). GTP-binding positions include 31–38 (GRSNVGKS), 58–62 (GKTQL), 83–86 (DLPG), 153–156 (TKMD), and 175–177 (FTA). Serine 38 and threonine 60 together coordinate Mg(2+).

The protein belongs to the TRAFAC class TrmE-Era-EngA-EngB-Septin-like GTPase superfamily. EngB GTPase family. Requires Mg(2+) as cofactor.

In terms of biological role, necessary for normal cell division and for the maintenance of normal septation. This is Probable GTP-binding protein EngB from Wolinella succinogenes (strain ATCC 29543 / DSM 1740 / CCUG 13145 / JCM 31913 / LMG 7466 / NCTC 11488 / FDC 602W) (Vibrio succinogenes).